The following is a 192-amino-acid chain: Phosphoheptose isomerase (192 aa).

The region spanning 34–192 is the SIS domain; sequence VVDAYRAGNK…VERELFLKGN (159 aa). 49–51 contacts substrate; the sequence is NGG. Zn(2+) contacts are provided by H58 and E62. Residues E62, 91 to 92, 117 to 119, S122, and Q169 contribute to the substrate site; these read ND and STS. Zn(2+) is bound by residues Q169 and H177.

It belongs to the SIS family. GmhA subfamily. Homotetramer. Requires Zn(2+) as cofactor.

Its subcellular location is the cytoplasm. The catalysed reaction is 2 D-sedoheptulose 7-phosphate = D-glycero-alpha-D-manno-heptose 7-phosphate + D-glycero-beta-D-manno-heptose 7-phosphate. It functions in the pathway carbohydrate biosynthesis; D-glycero-D-manno-heptose 7-phosphate biosynthesis; D-glycero-alpha-D-manno-heptose 7-phosphate and D-glycero-beta-D-manno-heptose 7-phosphate from sedoheptulose 7-phosphate: step 1/1. Catalyzes the isomerization of sedoheptulose 7-phosphate in D-glycero-D-manno-heptose 7-phosphate. In Geobacter sp. (strain M21), this protein is Phosphoheptose isomerase.